A 465-amino-acid chain; its full sequence is Glutamyl-tRNA reductase 2 (465 aa).

Substrate contacts are provided by residues 62-65 (TCNR), S122, 127-129 (EGQ), and Q133. C63 functions as the Nucleophile in the catalytic mechanism. 204–209 (GAGKMG) provides a ligand contact to NADP(+).

It belongs to the glutamyl-tRNA reductase family.

The protein resides in the plastid. The protein localises to the chloroplast. The catalysed reaction is (S)-4-amino-5-oxopentanoate + tRNA(Glu) + NADP(+) = L-glutamyl-tRNA(Glu) + NADPH + H(+). Its pathway is porphyrin-containing compound metabolism; protoporphyrin-IX biosynthesis; 5-aminolevulinate from L-glutamyl-tRNA(Glu): step 1/2. Catalyzes the NADPH-dependent reduction of glutamyl-tRNA(Glu) to glutamate 1-semialdehyde (GSA). This is Glutamyl-tRNA reductase 2 (HEMA2) from Hordeum vulgare (Barley).